The primary structure comprises 538 residues: UPF0761 membrane protein PsycPRwf_0630 (538 aa).

The next 6 helical transmembrane spans lie at 43–63, 100–120, 143–163, 183–203, 215–235, and 247–267; these read LLSI…VPAL, LTAI…TTIE, WTII…SSAV, WVQV…YWFI, IAGV…GIIM, and AFAA…LILL. Residues 427 to 538 are disordered; the sequence is SVFSAQDADA…IITEDDNPNK (112 aa). The span at 482 to 493 shows a compositional bias: low complexity; the sequence is PPDADIKAAAAK. Over residues 503–514 the composition is skewed to basic and acidic residues; that stretch reads KHTETAKQEHKK.

It belongs to the UPF0761 family.

Its subcellular location is the cell inner membrane. This is UPF0761 membrane protein PsycPRwf_0630 from Psychrobacter sp. (strain PRwf-1).